The following is a 123-amino-acid chain: Thioredoxin H-type 1 (123 aa).

An N-acetylalanine modification is found at A2. One can recognise a Thioredoxin domain in the interval 2 to 119; sequence AATAEVIPAG…IEAKLLKHSQ (118 aa). C45 and C48 form a disulfide bridge.

Belongs to the thioredoxin family. Plant H-type subfamily.

The protein resides in the cytoplasm. Functionally, participates in various redox reactions through the reversible oxidation of the active center dithiol to a disulfide. The H form is known to activate a number of cytosolic enzymes. This is Thioredoxin H-type 1 (THL-1) from Brassica napus (Rape).